We begin with the raw amino-acid sequence, 424 residues long: L-rhamnose isomerase (424 aa).

H261, D293, and D295 together coordinate Mn(2+).

Belongs to the rhamnose isomerase family. The cofactor is Mn(2+).

The protein localises to the cytoplasm. The catalysed reaction is L-rhamnopyranose = L-rhamnulose. Its pathway is carbohydrate degradation; L-rhamnose degradation; glycerone phosphate from L-rhamnose: step 1/3. In terms of biological role, catalyzes the interconversion of L-rhamnose and L-rhamnulose. The chain is L-rhamnose isomerase from Bacillus subtilis (strain 168).